Here is a 322-residue protein sequence, read N- to C-terminus: MLNSFKLSLQYILPKLWLTRLAGWGASKRAGWLTKLVIDLFVKYYKVDMKEAQKPDTASYRTFNEFFVRPLRDEVRPIDTDPNVLVMPADGVISQLGKIEEDKILQAKGHNYSLEALLAGNYLMADLFRNGTFVTTYLSPRDYHRVHMPCNGILREMIYVPGDLFSVNHLTAQNVPNLFARNERVICLFDTEFGPMAQILVGATIVGSIETVWAGTITPPREGIIKRWTWPAGENDGSVALLKGQEMGRFKLGSTVINLFAPGKVNLVEQLESLSVTKIGQPLAVSTETFVTPDAEPAPLPAEEIEAEHDASPLVDDKKDQV.

Active-site charge relay system; for autoendoproteolytic cleavage activity residues include D90, H147, and S254. S254 (schiff-base intermediate with substrate; via pyruvic acid; for decarboxylase activity) is an active-site residue. S254 carries the post-translational modification Pyruvic acid (Ser); by autocatalysis. The tract at residues P293–V322 is disordered. The segment covering E308–V322 has biased composition (basic and acidic residues).

This sequence belongs to the phosphatidylserine decarboxylase family. PSD-B subfamily. Prokaryotic type I sub-subfamily. In terms of assembly, heterodimer of a large membrane-associated beta subunit and a small pyruvoyl-containing alpha subunit. The cofactor is pyruvate. Post-translationally, is synthesized initially as an inactive proenzyme. Formation of the active enzyme involves a self-maturation process in which the active site pyruvoyl group is generated from an internal serine residue via an autocatalytic post-translational modification. Two non-identical subunits are generated from the proenzyme in this reaction, and the pyruvate is formed at the N-terminus of the alpha chain, which is derived from the carboxyl end of the proenzyme. The autoendoproteolytic cleavage occurs by a canonical serine protease mechanism, in which the side chain hydroxyl group of the serine supplies its oxygen atom to form the C-terminus of the beta chain, while the remainder of the serine residue undergoes an oxidative deamination to produce ammonia and the pyruvoyl prosthetic group on the alpha chain. During this reaction, the Ser that is part of the protease active site of the proenzyme becomes the pyruvoyl prosthetic group, which constitutes an essential element of the active site of the mature decarboxylase.

The protein localises to the cell membrane. It catalyses the reaction a 1,2-diacyl-sn-glycero-3-phospho-L-serine + H(+) = a 1,2-diacyl-sn-glycero-3-phosphoethanolamine + CO2. It functions in the pathway phospholipid metabolism; phosphatidylethanolamine biosynthesis; phosphatidylethanolamine from CDP-diacylglycerol: step 2/2. Catalyzes the formation of phosphatidylethanolamine (PtdEtn) from phosphatidylserine (PtdSer). The protein is Phosphatidylserine decarboxylase proenzyme of Escherichia coli O139:H28 (strain E24377A / ETEC).